A 285-amino-acid polypeptide reads, in one-letter code: Bifunctional protein FolD (285 aa).

NADP(+)-binding positions include 165–167 (GRS), Ser-190, and Ile-231.

The protein belongs to the tetrahydrofolate dehydrogenase/cyclohydrolase family. In terms of assembly, homodimer.

It carries out the reaction (6R)-5,10-methylene-5,6,7,8-tetrahydrofolate + NADP(+) = (6R)-5,10-methenyltetrahydrofolate + NADPH. It catalyses the reaction (6R)-5,10-methenyltetrahydrofolate + H2O = (6R)-10-formyltetrahydrofolate + H(+). It participates in one-carbon metabolism; tetrahydrofolate interconversion. Its function is as follows. Catalyzes the oxidation of 5,10-methylenetetrahydrofolate to 5,10-methenyltetrahydrofolate and then the hydrolysis of 5,10-methenyltetrahydrofolate to 10-formyltetrahydrofolate. The protein is Bifunctional protein FolD of Magnetococcus marinus (strain ATCC BAA-1437 / JCM 17883 / MC-1).